The chain runs to 321 residues: tRNA U34 carboxymethyltransferase (321 aa).

Residues Lys90, Trp104, Lys109, Gly129, 151-153, 180-181, Met195, Tyr199, and Arg314 contribute to the carboxy-S-adenosyl-L-methionine site; these read DPT and IE.

This sequence belongs to the class I-like SAM-binding methyltransferase superfamily. CmoB family. In terms of assembly, homotetramer.

It catalyses the reaction carboxy-S-adenosyl-L-methionine + 5-hydroxyuridine(34) in tRNA = 5-carboxymethoxyuridine(34) in tRNA + S-adenosyl-L-homocysteine + H(+). Catalyzes carboxymethyl transfer from carboxy-S-adenosyl-L-methionine (Cx-SAM) to 5-hydroxyuridine (ho5U) to form 5-carboxymethoxyuridine (cmo5U) at position 34 in tRNAs. The polypeptide is tRNA U34 carboxymethyltransferase (Histophilus somni (strain 2336) (Haemophilus somnus)).